We begin with the raw amino-acid sequence, 222 residues long: 2-C-methyl-D-erythritol 4-phosphate cytidylyltransferase (222 aa).

It belongs to the IspD/TarI cytidylyltransferase family. IspD subfamily.

It catalyses the reaction 2-C-methyl-D-erythritol 4-phosphate + CTP + H(+) = 4-CDP-2-C-methyl-D-erythritol + diphosphate. Its pathway is isoprenoid biosynthesis; isopentenyl diphosphate biosynthesis via DXP pathway; isopentenyl diphosphate from 1-deoxy-D-xylulose 5-phosphate: step 2/6. Catalyzes the formation of 4-diphosphocytidyl-2-C-methyl-D-erythritol from CTP and 2-C-methyl-D-erythritol 4-phosphate (MEP). The sequence is that of 2-C-methyl-D-erythritol 4-phosphate cytidylyltransferase from Azobacteroides pseudotrichonymphae genomovar. CFP2.